The primary structure comprises 122 residues: C-C motif chemokine 9 (122 aa).

Residues 1–21 (MKPFHTALSFLILTTALGIWA) form the signal peptide. Disulfide bonds link Cys57/Cys80, Cys58/Cys96, and Cys67/Cys107.

It belongs to the intercrine beta (chemokine CC) family. In terms of processing, the N-terminal is proteolytically cleaved by proteases associated with inflammatory responses. The processed forms CCL9(29-101), CCL9(30-101) and CCL9(31-101) exhibit increase in CCR1-mediated signaling and chemotaxis assays in vitro. As to expression, expressed mainly in the liver, lung, and the thymus, although some expression has been detected in a wide variety of tissues except brain.

It localises to the secreted. Monokine with inflammatory, pyrogenic and chemokinetic properties. Circulates at high concentrations in the blood of healthy animals. Binding to a high-affinity receptor activates calcium release in neutrophils. It also inhibits colony formation of bone marrow myeloid immature progenitors. This is C-C motif chemokine 9 (Ccl9) from Mus musculus (Mouse).